The following is a 416-amino-acid chain: Gamma-glutamyl phosphate reductase (416 aa).

Belongs to the gamma-glutamyl phosphate reductase family.

The protein localises to the cytoplasm. The enzyme catalyses L-glutamate 5-semialdehyde + phosphate + NADP(+) = L-glutamyl 5-phosphate + NADPH + H(+). Its pathway is amino-acid biosynthesis; L-proline biosynthesis; L-glutamate 5-semialdehyde from L-glutamate: step 2/2. Functionally, catalyzes the NADPH-dependent reduction of L-glutamate 5-phosphate into L-glutamate 5-semialdehyde and phosphate. The product spontaneously undergoes cyclization to form 1-pyrroline-5-carboxylate. This Petrotoga mobilis (strain DSM 10674 / SJ95) protein is Gamma-glutamyl phosphate reductase.